Here is a 661-residue protein sequence, read N- to C-terminus: MTGGRFDFDDGGTYCGGWEEGKAHGHGICTGPKGQGEYSGSWSHGFEVVGGYTWPSGNTYQGYWAQGKRHGLGVETKGKWMYRGEWSHGFKGRYGVRQSLCTPARYEGTWSNGLQDGYGVETYGDGGTYQGQWAGGMRHGYGVRQSVPYGMATVIRSPLRTSLASLRSEQSNGSVLHDAAAAADSPAGTRGGFVLNFHADAELAGKKKGGLFRRGSLLGSMKLRKSESKSSISSKRSSVRSDAAMSRISSSDANSTISFGDVDCDFCPVEDHVDATTTETYMGEWKNDKRNGFGVSERSNGMKYEGEWANNKRHGYGCTVFPDGSKEEGKYKNNILVRGIRKQLIPIRHTKTREKVDRAIEGAQRAAAMARTKVEIANSRTAHARAKADAADQAALAARQECDIARAVARELSPDFYQPGPDYVKQRFQEGVDAKENPEEKVPEKPPTPKESPHFYRKGTTPPRSPEASPKHSHSPASSPKPLKKQNPSSGARLNQDKRSVADEQVTAIVNKPLMSKAPTKEAGAVVPQSKYSGRHHIPNPSNGELHSQYHGYYVKLNAPQHPPVDVEDGDGSSQSSSALVHKPSANKWSPSKSVTKPVAKESKAEPKAKKSELAIPKNPASNDSCPALEKEANSGPNSIMIVLVMLLNIGLAILFVHFLT.

Topologically, residues 1 to 639 (MTGGRFDFDD…EKEANSGPNS (639 aa)) are cytoplasmic. MORN repeat units follow at residues 14-36 (YCGG…KGQG), 38-59 (YSGS…SGNT), 60-82 (YQGY…KWMY), 106-128 (YEGT…DGGT), and 129-151 (YQGQ…PYGM). Residues serine 157, serine 216, and serine 220 each carry the phosphoserine modification. The disordered stretch occupies residues 228 to 247 (SKSSISSKRSSVRSDAAMSR). MORN repeat units follow at residues 281 to 303 (YMGE…NGMK) and 304 to 326 (YEGE…DGSK). The span at 433–454 (DAKENPEEKVPEKPPTPKESPH) shows a compositional bias: basic and acidic residues. Residues 433–631 (DAKENPEEKV…SNDSCPALEK (199 aa)) are disordered. A Phosphothreonine modification is found at threonine 448. Residue serine 452 is modified to Phosphoserine. Threonine 461 is modified (phosphothreonine). Serine 465, serine 469, and serine 475 each carry phosphoserine. Positions 599-613 (VAKESKAEPKAKKSE) are enriched in basic and acidic residues. Residues 640–660 (IMIVLVMLLNIGLAILFVHFL) form a helical; Anchor for type IV membrane protein membrane-spanning segment.

The protein belongs to the junctophilin family. As to expression, abundantly expressed in skeletal muscle. Very low levels in heart.

It localises to the cell membrane. It is found in the endoplasmic reticulum membrane. The protein resides in the sarcoplasmic reticulum membrane. Its function is as follows. Junctophilins contribute to the formation of junctional membrane complexes (JMCs) which link the plasma membrane with the endoplasmic or sarcoplasmic reticulum in excitable cells. Provides a structural foundation for functional cross-talk between the cell surface and intracellular calcium release channels. JPH1 contributes to the construction of the skeletal muscle triad by linking the t-tubule (transverse-tubule) and SR (sarcoplasmic reticulum) membranes. This Homo sapiens (Human) protein is Junctophilin-1 (JPH1).